The primary structure comprises 518 residues: MTSSKIEMPGEVKADPAALMASLHLLPSPTPNLEIKYTKIFINNEWQNSESGRVFPVYNPATGEQVCEVQEADKADIDKAVQAARLAFSLGSVWRRMDASERGRLLDKLADLVERDRAVLATMESLNGGKPFLQAFYVDLQGVIKTFRYYAGWADKIHGMTIPVDGDYFTFTRHEPIGVCGQIIPWNFPLLMFAWKIAPALCCGNTVVIKPAEQTPLSALYMGALIKEAGFPPGVINILPGYGPTAGAAIASHIGIDKIAFTGSTEVGKLIQEAAGRSNLKRVTLELGGKSPNIIFADADLDYAVEQAHQGVFFNQGQCCTAGSRIFVEESIYEEFVRRSVERAKRRVVGSPFDPTTEQGPQIDKKQYNKILELIQSGVAEGAKLECGGKGLGRKGFFIEPTVFSNVTDDMRIAKEEIFGPVQEILRFKTMDEVIERANNSDFGLVAAVFTNDINKALTVSSAMQAGTVWINCYNALNAQSPFGGFKMSGNGREMGEFGLREYSEVKTVTVKIPQKNS.

Tyr168 is modified (phosphotyrosine). Residues 184-186 (IPW), 210-213 (KPAE), and 264-266 (STE) contribute to the NAD(+) site. Catalysis depends on Glu286, which acts as the Proton acceptor. Catalysis depends on Cys320, which acts as the Nucleophile. Phosphoserine is present on Ser351. Residues 366–370 (KQYNK) and Glu417 contribute to the NAD(+) site.

The protein belongs to the aldehyde dehydrogenase family. As to quaternary structure, homotetramer.

The protein localises to the cytoplasm. The enzyme catalyses retinal + NAD(+) + H2O = retinoate + NADH + 2 H(+). It catalyses the reaction all-trans-retinal + NAD(+) + H2O = all-trans-retinoate + NADH + 2 H(+). It carries out the reaction all-trans-13,14-dihydroretinal + NAD(+) + H2O = all-trans-13,14-dihydroretinoate + NADH + 2 H(+). It functions in the pathway cofactor metabolism; retinol metabolism. Catalyzes the NAD-dependent oxidation of aldehyde substrates, such as all-trans-retinal and all-trans-13,14-dihydroretinal, to their corresponding carboxylic acids, all-trans-retinoate and all-trans-13,14-dihydroretinoate, respectively. Retinoate signaling is critical for the transcriptional control of many genes, for instance it is crucial for initiation of meiosis in both male and female. Recognizes retinal as substrate, both in its free form and when bound to cellular retinol-binding protein. Can metabolize octanal and decanal, but has only very low activity with benzaldehyde, acetaldehyde and propanal. Displays complete lack of activity with citral. This chain is Retinal dehydrogenase 2 (ALDH1A2), found in Homo sapiens (Human).